We begin with the raw amino-acid sequence, 334 residues long: Isocitrate/homoisocitrate dehydrogenase (334 aa).

70 to 72 (ATS) contacts NADH. Positions 72, 85, 88, 98, 118, 125, 171, and 173 each coordinate (2R,3S)-homoisocitrate. Position 173 (asparagine 173) interacts with NADH. Residues aspartate 204, aspartate 228, and aspartate 232 each contribute to the Mg(2+) site. NADH is bound by residues 261-265 (GSAPD) and asparagine 273.

Belongs to the isocitrate and isopropylmalate dehydrogenases family. Homotetramer. Dimer of dimers. The homotetramer can transiently dissociate into homodimers. Mg(2+) is required as a cofactor.

It carries out the reaction (2R,3S)-homoisocitrate + NAD(+) = 2-oxoadipate + CO2 + NADH. It catalyses the reaction D-threo-isocitrate + NAD(+) = 2-oxoglutarate + CO2 + NADH. It functions in the pathway amino-acid biosynthesis; L-lysine biosynthesis via AAA pathway; L-alpha-aminoadipate from 2-oxoglutarate: step 4/5. Functionally, catalyzes the NAD(+)-dependent oxidative decarboxylation of homoisocitrate to 2-oxoadipate (alpha-ketoadipate), a reaction involved in lysine biosynthesis through the alpha-aminoadipate pathway. In addition, has high activity with isocitrate, but is inactive with 3-isopropylmalate. In Thermus thermophilus (strain ATCC BAA-163 / DSM 7039 / HB27), this protein is Isocitrate/homoisocitrate dehydrogenase (hicd).